We begin with the raw amino-acid sequence, 205 residues long: Urease accessory protein UreG (205 aa).

Residue 14–21 (GPVGSGKT) participates in GTP binding.

This sequence belongs to the SIMIBI class G3E GTPase family. UreG subfamily. Homodimer. UreD, UreF and UreG form a complex that acts as a GTP-hydrolysis-dependent molecular chaperone, activating the urease apoprotein by helping to assemble the nickel containing metallocenter of UreC. The UreE protein probably delivers the nickel.

It is found in the cytoplasm. Its function is as follows. Facilitates the functional incorporation of the urease nickel metallocenter. This process requires GTP hydrolysis, probably effectuated by UreG. In Escherichia coli O157:H7, this protein is Urease accessory protein UreG.